We begin with the raw amino-acid sequence, 272 residues long: Golgi to ER traffic protein 5 (272 aa).

Disordered stretches follow at residues 1 to 35 (MSTVDQSTVTTALSSSSSNRHQGNDTYSIPKHSGT) and 85 to 105 (LHAPHPEMPKKTKQPLAPGSS). One can recognise a Ubiquitin-like domain in the interval 108–198 (ITVHLKSARN…VEFGVMIIGG (91 aa)). A disordered region spans residues 212–231 (SAEQKESYEPPKPAVGPSGE).

The protein belongs to the GET5 family. As to quaternary structure, forms homodimers via its C-terminal domain. Component of the get4/get5/sgt2 sorting complex. Binds directly sgt12 homodimers.

It localises to the cytoplasm. Component of the get4/get5/sgt2 sorting complex involved in the GET (guided entry of TA proteins) pathway that leads to the insertion of tail-anchored (TA) proteins into the endoplasmic reticulum. Get4 and get5 form an obligate complex that catalyzes the transfer of tail-anchored proteins destined to the endoplasmic reticulum from sgt2 to the cytosolic targeting factor which then targets the TA protein to the ER membrane via get1/get2. The protein is Golgi to ER traffic protein 5 of Aspergillus fumigatus (strain ATCC MYA-4609 / CBS 101355 / FGSC A1100 / Af293) (Neosartorya fumigata).